The primary structure comprises 428 residues: Arginine biosynthesis bifunctional protein ArgJ, mitochondrial (428 aa).

6 residues coordinate substrate: threonine 171, lysine 197, threonine 208, glutamate 294, asparagine 423, and serine 428. Threonine 208 functions as the Nucleophile in the catalytic mechanism.

The protein belongs to the ArgJ family. As to quaternary structure, heterodimer of an alpha and a beta chain. The alpha and beta chains are autoproteolytically processed from a single precursor protein within the mitochondrion.

The protein resides in the mitochondrion matrix. The catalysed reaction is N(2)-acetyl-L-ornithine + L-glutamate = N-acetyl-L-glutamate + L-ornithine. It carries out the reaction L-glutamate + acetyl-CoA = N-acetyl-L-glutamate + CoA + H(+). It functions in the pathway amino-acid biosynthesis; L-arginine biosynthesis; L-ornithine and N-acetyl-L-glutamate from L-glutamate and N(2)-acetyl-L-ornithine (cyclic): step 1/1. It participates in amino-acid biosynthesis; L-arginine biosynthesis; N(2)-acetyl-L-ornithine from L-glutamate: step 1/4. Catalyzes two activities which are involved in the cyclic version of arginine biosynthesis: the synthesis of acetylglutamate from glutamate and acetyl-CoA, and of ornithine by transacetylation between acetylornithine and glutamate. In Komagataella phaffii (strain GS115 / ATCC 20864) (Yeast), this protein is Arginine biosynthesis bifunctional protein ArgJ, mitochondrial.